A 317-amino-acid chain; its full sequence is L-lactate dehydrogenase (317 aa).

NAD(+) is bound by residues V16, D37, K42, Y68, and 82–83; that span reads GA. Substrate-binding residues include Q85 and R91. NAD(+) is bound by residues T104, 121 to 123, and S146; that span reads ATN. 123-126 is a substrate binding site; that stretch reads NPVD. 151-154 is a binding site for substrate; the sequence is DTAR. 2 residues coordinate beta-D-fructose 1,6-bisphosphate: R156 and H171. H178 functions as the Proton acceptor in the catalytic mechanism. At Y222 the chain carries Phosphotyrosine. T231 provides a ligand contact to substrate.

Belongs to the LDH/MDH superfamily. LDH family. In terms of assembly, homotetramer.

The protein localises to the cytoplasm. The enzyme catalyses (S)-lactate + NAD(+) = pyruvate + NADH + H(+). It participates in fermentation; pyruvate fermentation to lactate; (S)-lactate from pyruvate: step 1/1. With respect to regulation, allosterically activated by fructose 1,6-bisphosphate (FBP). In terms of biological role, catalyzes the conversion of lactate to pyruvate. This is L-lactate dehydrogenase from Corynebacterium efficiens (strain DSM 44549 / YS-314 / AJ 12310 / JCM 11189 / NBRC 100395).